The sequence spans 297 residues: Ribosomal RNA small subunit methyltransferase A (297 aa).

S-adenosyl-L-methionine contacts are provided by Asn-31, Leu-33, Gly-58, Glu-79, Asp-104, and Asn-129.

The protein belongs to the class I-like SAM-binding methyltransferase superfamily. rRNA adenine N(6)-methyltransferase family. RsmA subfamily.

The protein localises to the cytoplasm. The enzyme catalyses adenosine(1518)/adenosine(1519) in 16S rRNA + 4 S-adenosyl-L-methionine = N(6)-dimethyladenosine(1518)/N(6)-dimethyladenosine(1519) in 16S rRNA + 4 S-adenosyl-L-homocysteine + 4 H(+). Functionally, specifically dimethylates two adjacent adenosines (A1518 and A1519) in the loop of a conserved hairpin near the 3'-end of 16S rRNA in the 30S particle. May play a critical role in biogenesis of 30S subunits. This Pediococcus pentosaceus (strain ATCC 25745 / CCUG 21536 / LMG 10740 / 183-1w) protein is Ribosomal RNA small subunit methyltransferase A.